We begin with the raw amino-acid sequence, 116 residues long: Protein Wnt-5b (116 aa).

Serine 1 is lipidated: O-palmitoleoyl serine; by PORCN. N-linked (GlcNAc...) asparagine glycans are attached at residues asparagine 69 and asparagine 83. A disulfide bridge connects residues cysteine 82 and cysteine 97.

This sequence belongs to the Wnt family. Post-translationally, palmitoleoylation is required for efficient binding to frizzled receptors. Depalmitoleoylation leads to Wnt signaling pathway inhibition.

It is found in the secreted. It localises to the extracellular space. The protein localises to the extracellular matrix. Functionally, ligand for members of the frizzled family of seven transmembrane receptors. Probable developmental protein. May be a signaling molecule which affects the development of discrete regions of tissues. Is likely to signal over only few cell diameters. The sequence is that of Protein Wnt-5b (WNT-5B) from Alopias vulpinus (Common thresher shark).